Consider the following 266-residue polypeptide: Small ribosomal subunit protein eS1 (266 aa).

The disordered stretch occupies residues 237–266; it reads DGGSKTGEVGETGSKVDRPEGYEPPVQETV.

Belongs to the eukaryotic ribosomal protein eS1 family. Component of the small ribosomal subunit. Mature ribosomes consist of a small (40S) and a large (60S) subunit. The 40S subunit contains about 33 different proteins and 1 molecule of RNA (18S). The 60S subunit contains about 49 different proteins and 3 molecules of RNA (28S, 5.8S and 5S).

It is found in the cytoplasm. The polypeptide is Small ribosomal subunit protein eS1 (Lysiphlebus testaceipes (Greenbugs aphid parastoid)).